A 312-amino-acid chain; its full sequence is L-lactate dehydrogenase (312 aa).

Residues Val-11, Asp-32, Arg-37, and 76–77 (GA) each bind NAD(+). Substrate contacts are provided by residues Gln-79, Arg-85, and 117-120 (NPVD). NAD(+) is bound by residues 115-117 (VSN) and Thr-140. 145–148 (DTAR) lines the substrate pocket. The beta-D-fructose 1,6-bisphosphate site is built by Arg-150 and His-165. The active-site Proton acceptor is His-172. A Phosphotyrosine modification is found at Tyr-217. Thr-226 serves as a coordination point for substrate.

The protein belongs to the LDH/MDH superfamily. LDH family. As to quaternary structure, homotetramer.

The protein resides in the cytoplasm. The catalysed reaction is (S)-lactate + NAD(+) = pyruvate + NADH + H(+). Its pathway is fermentation; pyruvate fermentation to lactate; (S)-lactate from pyruvate: step 1/1. Its activity is regulated as follows. Allosterically activated by fructose 1,6-bisphosphate (FBP). Its function is as follows. Catalyzes the conversion of lactate to pyruvate. This is L-lactate dehydrogenase from Pseudothermotoga lettingae (strain ATCC BAA-301 / DSM 14385 / NBRC 107922 / TMO) (Thermotoga lettingae).